The sequence spans 389 residues: GTPase Obg (389 aa).

An Obg domain is found at 1-159 (MKFVDEAVIR…RSLKLELMLL (159 aa)). Residues 122–144 (FHGLGNTRFKSSTNRAPRQKTLG) form a disordered region. The OBG-type G domain occupies 160-333 (ADVGLLGMPN…LSLKLIDFIE (174 aa)). GTP-binding positions include 166–173 (GMPNAGKS), 191–195 (FTTLV), 213–216 (DIPG), 283–286 (NKTD), and 314–316 (SAY). 2 residues coordinate Mg(2+): Ser-173 and Thr-193.

This sequence belongs to the TRAFAC class OBG-HflX-like GTPase superfamily. OBG GTPase family. In terms of assembly, monomer. Mg(2+) serves as cofactor.

It localises to the cytoplasm. In terms of biological role, an essential GTPase which binds GTP, GDP and possibly (p)ppGpp with moderate affinity, with high nucleotide exchange rates and a fairly low GTP hydrolysis rate. Plays a role in control of the cell cycle, stress response, ribosome biogenesis and in those bacteria that undergo differentiation, in morphogenesis control. This chain is GTPase Obg, found in Shewanella woodyi (strain ATCC 51908 / MS32).